Here is a 348-residue protein sequence, read N- to C-terminus: Fructose-1,6-bisphosphatase class 1 (348 aa).

Mg(2+)-binding residues include Glu92, Asp111, Leu113, and Asp114. Residues 114–117 (DGSS) and Asn204 each bind substrate. Glu276 is a Mg(2+) binding site.

Belongs to the FBPase class 1 family. Homotetramer. Mg(2+) serves as cofactor.

The protein localises to the cytoplasm. The catalysed reaction is beta-D-fructose 1,6-bisphosphate + H2O = beta-D-fructose 6-phosphate + phosphate. It functions in the pathway carbohydrate biosynthesis; gluconeogenesis. The protein is Fructose-1,6-bisphosphatase class 1 of Methylorubrum populi (strain ATCC BAA-705 / NCIMB 13946 / BJ001) (Methylobacterium populi).